The following is a 529-amino-acid chain: Bifunctional purine biosynthesis protein PurH (529 aa).

Residues 1–148 (MQQRRPIRRA…KNHKDVAIVV (148 aa)) form the MGS-like domain.

The protein belongs to the PurH family.

The catalysed reaction is (6R)-10-formyltetrahydrofolate + 5-amino-1-(5-phospho-beta-D-ribosyl)imidazole-4-carboxamide = 5-formamido-1-(5-phospho-D-ribosyl)imidazole-4-carboxamide + (6S)-5,6,7,8-tetrahydrofolate. It carries out the reaction IMP + H2O = 5-formamido-1-(5-phospho-D-ribosyl)imidazole-4-carboxamide. The protein operates within purine metabolism; IMP biosynthesis via de novo pathway; 5-formamido-1-(5-phospho-D-ribosyl)imidazole-4-carboxamide from 5-amino-1-(5-phospho-D-ribosyl)imidazole-4-carboxamide (10-formyl THF route): step 1/1. It functions in the pathway purine metabolism; IMP biosynthesis via de novo pathway; IMP from 5-formamido-1-(5-phospho-D-ribosyl)imidazole-4-carboxamide: step 1/1. This chain is Bifunctional purine biosynthesis protein PurH, found in Yersinia pseudotuberculosis serotype IB (strain PB1/+).